Consider the following 96-residue polypeptide: Putative septation protein SpoVG (96 aa).

The protein belongs to the SpoVG family.

Could be involved in septation. The polypeptide is Putative septation protein SpoVG (Phytoplasma australiense).